Reading from the N-terminus, the 131-residue chain is Small ribosomal subunit protein uS8 (131 aa).

It belongs to the universal ribosomal protein uS8 family. Part of the 30S ribosomal subunit. Contacts proteins S5 and S12.

In terms of biological role, one of the primary rRNA binding proteins, it binds directly to 16S rRNA central domain where it helps coordinate assembly of the platform of the 30S subunit. The protein is Small ribosomal subunit protein uS8 of Campylobacter fetus subsp. fetus (strain 82-40).